We begin with the raw amino-acid sequence, 236 residues long: uncharacterized protein (236 aa).

Positions 4–236 constitute a GP-PDE domain; the sequence is QFLIAYRGYS…VKFQITAQIY (233 aa).

It to glycerophosphoryl diester phosphodiesterases (EC 3.1.4.46). The protein to M.genitalium MG293.

This is an uncharacterized protein from Mycoplasma genitalium (strain ATCC 33530 / DSM 19775 / NCTC 10195 / G37) (Mycoplasmoides genitalium).